A 60-amino-acid polypeptide reads, in one-letter code: Short neurotoxin 1 (60 aa).

4 cysteine pairs are disulfide-bonded: Cys-3–Cys-22, Cys-17–Cys-39, Cys-41–Cys-52, and Cys-53–Cys-58.

It belongs to the three-finger toxin family. Short-chain subfamily. Type I alpha-neurotoxin sub-subfamily. As to expression, expressed by the venom gland.

The protein localises to the secreted. Its function is as follows. Binds to muscle nicotinic acetylcholine receptor (nAChR) and inhibit acetylcholine from binding to the receptor, thereby impairing neuromuscular transmission. In Hydrophis schistosus (Beaked sea snake), this protein is Short neurotoxin 1.